We begin with the raw amino-acid sequence, 884 residues long: MSGVNEIRSSFIDYFVKEGHEAVASSPLVPQNDPTLMFTNAGMVQFKNVFTGVEKRPYSRAATSQKCVRAGGKHNDLDNVGYTARHHTFFEMLGNFSFGDYFKDRAIELAWNLVTRTFELPRDRLVVTVFSEDEEAYGLWKKIAGLSDDKIIRIPTSDNFWSMGDTGPCGPCSEIFFDHGPNVPGGPPGSPDQDGDRFIEIWNLVFMQFEQLPGGERLALPRPSIDTGMGLERVSAVLQGVHDNYDTDLMRALIAEVAELTSVNPDGPQKASHRVIADHLRASVFLTADGVLPSNEGRGYVLRRIMRRAMRHAQLLGAKDPLMHRLVPVLVREMGRAYPEIVRAESLAEETLLLEETRFRRTLERGLSILEEESTGLTSGGQFPGEVAFKLYDTYGFPLDLTQDALRARGISVDTTAFDAAMARQKAEARASWAGSGEAATDTLWFSVRDEVGATEFLGYETEKAEGVVAALVRDGAVVDSLAAGEKGLVILNQTPFYAESGGQVGDIGRVSGEGGVAAQVVATQKKLGDLFVHEVKVETGTLKRGTALVLEVDHARRAAVRANHSATHLLHEALRRVLGDHVAQKGSLVAPDRLRFDFSHPKPLSGGELAEVETIANRFVLRNEPVETRIMAVDDAITSGARALFGEKYGDEVRVVSMGTDDGNGAPYSVELCGGTHVKRTGDIGLISVLSESAVASGVRRIEALTADAARRHLNAASAALAGTAAVLKAPVAEVEARVATLVEERRRLERELAEARKKLAMGGGGEASGDAVRTVGDIKLLARRVEGIEIKDLKGLVDEGKKQIGSGVVAIVGVTSDGKAGIVVGVTADLIARFDAVALVRVGSEALGGKGGGGRPDMAQAGGPDGAKAEAALDAIAAAMAG.

The Zn(2+) site is built by His-565, His-569, Cys-674, and His-678.

This sequence belongs to the class-II aminoacyl-tRNA synthetase family. It depends on Zn(2+) as a cofactor.

Its subcellular location is the cytoplasm. It carries out the reaction tRNA(Ala) + L-alanine + ATP = L-alanyl-tRNA(Ala) + AMP + diphosphate. Catalyzes the attachment of alanine to tRNA(Ala) in a two-step reaction: alanine is first activated by ATP to form Ala-AMP and then transferred to the acceptor end of tRNA(Ala). Also edits incorrectly charged Ser-tRNA(Ala) and Gly-tRNA(Ala) via its editing domain. This is Alanine--tRNA ligase from Xanthobacter autotrophicus (strain ATCC BAA-1158 / Py2).